Here is a 63-residue protein sequence, read N- to C-terminus: Alpha-conotoxin-like Am1.6 (63 aa).

A signal peptide spans 1–21 (MGMRMMFTVFLLVVLATTVVS). Positions 22-46 (FTSYRASDGRNAAAKASDLIALTVR) are excised as a propeptide. The segment at 50 to 52 (SRP) is ser-Xaa-Pro motif, crucial for potent interaction with nAChR.

The protein belongs to the conotoxin A superfamily. In terms of processing, is not hydroxylated. Post-translationally, contains 2 disulfide bonds. Expressed by the venom duct.

The protein resides in the secreted. Its function is as follows. Alpha-conotoxins act on postsynaptic membranes, they bind to the nicotinic acetylcholine receptors (nAChR) and thus inhibit them. This is Alpha-conotoxin-like Am1.6 from Conus amadis (Amadis cone).